Consider the following 103-residue polypeptide: UPF0473 protein SGO_2040 (103 aa).

Belongs to the UPF0473 family.

The protein is UPF0473 protein SGO_2040 of Streptococcus gordonii (strain Challis / ATCC 35105 / BCRC 15272 / CH1 / DL1 / V288).